A 140-amino-acid polypeptide reads, in one-letter code: Large ribosomal subunit protein uL22c (140 aa).

This sequence belongs to the universal ribosomal protein uL22 family. As to quaternary structure, part of the 50S ribosomal subunit.

Its subcellular location is the plastid. The protein localises to the chloroplast. Functionally, this protein binds specifically to 23S rRNA. Its function is as follows. The globular domain of the protein is located near the polypeptide exit tunnel on the outside of the subunit, while an extended beta-hairpin is found that lines the wall of the exit tunnel in the center of the 70S ribosome. The sequence is that of Large ribosomal subunit protein uL22c (rpl22) from Calycanthus floridus var. glaucus (Eastern sweetshrub).